Consider the following 289-residue polypeptide: UPF0276 protein BPP1075 (289 aa).

It belongs to the UPF0276 family.

This chain is UPF0276 protein BPP1075, found in Bordetella parapertussis (strain 12822 / ATCC BAA-587 / NCTC 13253).